The primary structure comprises 362 residues: Fructose-bisphosphate aldolase (362 aa).

Ser-65 is a D-glyceraldehyde 3-phosphate binding site. Asp-112 acts as the Proton donor in catalysis. Positions 113, 147, 177, and 229 each coordinate Zn(2+). Residue Gly-230 coordinates dihydroxyacetone phosphate. His-268 is a binding site for Zn(2+). Dihydroxyacetone phosphate-binding positions include 269 to 271 (GGS) and 290 to 293 (NVDT).

The protein belongs to the class II fructose-bisphosphate aldolase family. Homodimer. Zn(2+) serves as cofactor.

It carries out the reaction beta-D-fructose 1,6-bisphosphate = D-glyceraldehyde 3-phosphate + dihydroxyacetone phosphate. It participates in carbohydrate degradation; glycolysis; D-glyceraldehyde 3-phosphate and glycerone phosphate from D-glucose: step 4/4. In terms of biological role, catalyzes the aldol condensation of dihydroxyacetone phosphate (DHAP or glycerone-phosphate) with glyceraldehyde 3-phosphate (G3P) to form fructose 1,6-bisphosphate (FBP) in gluconeogenesis and the reverse reaction in glycolysis. This is Fructose-bisphosphate aldolase (fbaA) from Aspergillus oryzae (strain ATCC 42149 / RIB 40) (Yellow koji mold).